A 365-amino-acid polypeptide reads, in one-letter code: MFEVNPVINQIKEIRERTELLRGYLDYALKQERLEEVNAELEDSAVWNEPERAQALGREKSALEAVVETIDTLVTGTDDVEGLLELAVEAEDQETFDEAQSELADLNEQLEALEFRRMFSGPHDSNDAYLDLQSGSGGTEAQDWCNILLRMYLRWGEAKGFKVELVEATGGDVAGIKGATVRFVGEYAYGWLRTETGVHRLVRKSPFDSSGRRHTSFASAFVYPEVDDNIEIDMNPSDLRIDVYRASGAGGQHVNTTESAVRITHVPTNTVVQCQNERSQHKNKAQAMKQLKAKLFELELQQQNAEKQTQEDSKSDIGWGSQIRSYVLDDARIKDLRTGVESRNTQSVLDGNLDKFIEASLKSGL.

N5-methylglutamine is present on Gln-252.

Belongs to the prokaryotic/mitochondrial release factor family. Methylated by PrmC. Methylation increases the termination efficiency of RF2.

It is found in the cytoplasm. Its function is as follows. Peptide chain release factor 2 directs the termination of translation in response to the peptide chain termination codons UGA and UAA. The polypeptide is Peptide chain release factor 2 (Pseudoalteromonas translucida (strain TAC 125)).